Reading from the N-terminus, the 211-residue chain is MTSQRTRERLIQRLYEEGLSNARVLEVIRRTPRHLFVDEALAHRAYEDTALPIGHNQTISQPFMVARMTELLLAAGPLDKVMEIGTGSGYQTAVLAQLVERVFSVERIQALQDKAKERLAELNLRNVVFRWGDGWEGWSALAPYNGIIVTAAASEVPQSLLDQLAPGGRLVIPVGGGEVQQLMLIVRTEDGFSRQVLDSVRFVPLLNGPIA.

Ser60 is a catalytic residue.

Belongs to the methyltransferase superfamily. L-isoaspartyl/D-aspartyl protein methyltransferase family.

The protein resides in the cytoplasm. It carries out the reaction [protein]-L-isoaspartate + S-adenosyl-L-methionine = [protein]-L-isoaspartate alpha-methyl ester + S-adenosyl-L-homocysteine. In terms of biological role, catalyzes the methyl esterification of L-isoaspartyl residues in peptides and proteins that result from spontaneous decomposition of normal L-aspartyl and L-asparaginyl residues. It plays a role in the repair and/or degradation of damaged proteins. The protein is Protein-L-isoaspartate O-methyltransferase of Pseudomonas paraeruginosa (strain DSM 24068 / PA7) (Pseudomonas aeruginosa (strain PA7)).